The chain runs to 2434 residues: Protein Ycf2 (2434 aa).

Residue Gly-1693–Ser-1700 participates in ATP binding.

This sequence belongs to the Ycf2 family.

The protein localises to the plastid. It is found in the chloroplast stroma. Probable ATPase of unknown function. Its presence in a non-photosynthetic plant (Epifagus virginiana) and experiments in tobacco indicate that it has an essential function which is probably not related to photosynthesis. This is Protein Ycf2 from Cycas taitungensis (Prince sago).